A 93-amino-acid chain; its full sequence is Alpha-defensin 22 (93 aa).

A signal peptide spans 1–19 (MKKLVLLSALVLLAYQVQT). The propeptide occupies 20 to 58 (DPIQNTDEETNTEEQPGEEDQAVSVSFGGQEGSALHEKL). The interval 22–41 (IQNTDEETNTEEQPGEEDQA) is disordered. Positions 25-40 (TDEETNTEEQPGEEDQ) are enriched in acidic residues. Disulfide bonds link Cys64/Cys89, Cys66/Cys81, and Cys71/Cys88.

It belongs to the alpha-defensin family.

Its subcellular location is the secreted. May have microbicidal activities. This chain is Alpha-defensin 22 (Defa22), found in Mus musculus (Mouse).